Reading from the N-terminus, the 511-residue chain is Sulfate adenylyltransferase (511 aa).

Residues 1–167 (MPAPHGGILQ…LEAIQLPQHY (167 aa)) are N-terminal. Residues 168–393 (DYPGLRKTPA…LRESNPPRPK (226 aa)) form a catalytic region. Glutamine 195 is a sulfate binding site. ATP contacts are provided by residues 195-198 (QTRN) and 289-292 (GRDH). Catalysis depends on residues threonine 196, arginine 197, and asparagine 198. Arginine 197 contacts sulfate. Alanine 293 contributes to the sulfate binding site. Valine 331 serves as a coordination point for ATP. A required for oligomerization; adenylyl-sulfate kinase-like region spans residues 394 to 511 (QGFSIVLGNS…FLEDNGFFVF (118 aa)).

The protein belongs to the sulfate adenylyltransferase family. As to quaternary structure, homohexamer. Dimer of trimers.

The protein resides in the cytoplasm. The catalysed reaction is sulfate + ATP + H(+) = adenosine 5'-phosphosulfate + diphosphate. It functions in the pathway sulfur metabolism; hydrogen sulfide biosynthesis; sulfite from sulfate: step 1/3. In terms of biological role, catalyzes the first intracellular reaction of sulfate assimilation, forming adenosine-5'-phosphosulfate (APS) from inorganic sulfate and ATP. Plays an important role in sulfate activation as a component of the biosynthesis pathway of sulfur-containing amino acids. This is Sulfate adenylyltransferase from Saccharomyces cerevisiae (strain ATCC 204508 / S288c) (Baker's yeast).